A 252-amino-acid chain; its full sequence is Probable phosphatase Shewana3_2794 (252 aa).

Residues histidine 8, histidine 10, histidine 16, histidine 41, glutamate 74, histidine 102, histidine 132, aspartate 193, and histidine 195 each contribute to the Zn(2+) site.

It belongs to the PHP family. It depends on Zn(2+) as a cofactor.

This chain is Probable phosphatase Shewana3_2794, found in Shewanella sp. (strain ANA-3).